A 99-amino-acid polypeptide reads, in one-letter code: Large ribosomal subunit protein uL23 (99 aa).

Belongs to the universal ribosomal protein uL23 family. Part of the 50S ribosomal subunit. Contacts protein L29, and trigger factor when it is bound to the ribosome.

Functionally, one of the early assembly proteins it binds 23S rRNA. One of the proteins that surrounds the polypeptide exit tunnel on the outside of the ribosome. Forms the main docking site for trigger factor binding to the ribosome. This Blochmanniella floridana protein is Large ribosomal subunit protein uL23.